An 886-amino-acid polypeptide reads, in one-letter code: Alanine--tRNA ligase (886 aa).

The Zn(2+) site is built by H564, H568, C666, and H670.

It belongs to the class-II aminoacyl-tRNA synthetase family. The cofactor is Zn(2+).

The protein resides in the cytoplasm. The catalysed reaction is tRNA(Ala) + L-alanine + ATP = L-alanyl-tRNA(Ala) + AMP + diphosphate. Its function is as follows. Catalyzes the attachment of alanine to tRNA(Ala) in a two-step reaction: alanine is first activated by ATP to form Ala-AMP and then transferred to the acceptor end of tRNA(Ala). Also edits incorrectly charged Ser-tRNA(Ala) and Gly-tRNA(Ala) via its editing domain. The polypeptide is Alanine--tRNA ligase (Prochlorococcus marinus (strain MIT 9312)).